Consider the following 291-residue polypeptide: Homoserine kinase (291 aa).

Position 79–89 (79–89 (PLARGLGSSSA)) interacts with ATP.

The protein belongs to the GHMP kinase family. Homoserine kinase subfamily.

Its subcellular location is the cytoplasm. The catalysed reaction is L-homoserine + ATP = O-phospho-L-homoserine + ADP + H(+). It functions in the pathway amino-acid biosynthesis; L-threonine biosynthesis; L-threonine from L-aspartate: step 4/5. Its function is as follows. Catalyzes the ATP-dependent phosphorylation of L-homoserine to L-homoserine phosphate. This Leuconostoc citreum (strain KM20) protein is Homoserine kinase.